The chain runs to 142 residues: Putative pre-16S rRNA nuclease (142 aa).

It belongs to the YqgF nuclease family.

The protein resides in the cytoplasm. Could be a nuclease involved in processing of the 5'-end of pre-16S rRNA. The chain is Putative pre-16S rRNA nuclease from Chloroflexus aggregans (strain MD-66 / DSM 9485).